Consider the following 151-residue polypeptide: Austinoid biosynthesis clusters protein F (151 aa).

This sequence belongs to the trt14 isomerase family. In terms of assembly, homodimer.

Its pathway is secondary metabolite biosynthesis; terpenoid biosynthesis. Part of the gene cluster B that mediates the biosynthesis of the fungal meroterpenoid acetoxydehydroaustin. The first step of the pathway is the synthesis of 3,5-dimethylorsellinic acid by the polyketide synthase ausA. 3,5-dimethylorsellinic acid is then prenylated by the polyprenyl transferase ausN. Further epoxidation by the FAD-dependent monooxygenase ausM and cyclization by the probable terpene cyclase ausL lead to the formation of protoaustinoid A. Protoaustinoid A is then oxidized to spiro-lactone preaustinoid A3 by the combined action of the FAD-binding monooxygenases ausB and ausC, and the dioxygenase ausE. Acid-catalyzed keto-rearrangement and ring contraction of the tetraketide portion of preaustinoid A3 by ausJ lead to the formation of preaustinoid A4. The aldo-keto reductase ausK, with the help of ausH, is involved in the next step by transforming preaustinoid A4 into isoaustinone which is in turn hydroxylated by the P450 monooxygenase ausI to form austinolide. The cytochrome P450 monooxygenase ausG then modifies austinolide to austinol. Austinol is further acetylated to austin by the O-acetyltransferase ausP, which spontaneously changes to dehydroaustin. The cytochrome P450 monooxygenase then converts dehydroaustin is into 7-dehydrodehydroaustin. The hydroxylation catalyzed by ausR permits the second O-acetyltransferase ausQ to add an additional acetyl group to the molecule, leading to the formation of acetoxydehydroaustin. Due to genetic rearrangements of the clusters and the subsequent loss of some enzymes, the end product of the Penicillium brasilianum austinoid biosynthesis clusters is acetoxydehydroaustin. In Penicillium brasilianum, this protein is Austinoid biosynthesis clusters protein F.